Here is a 205-residue protein sequence, read N- to C-terminus: MLGTKRHWPPGPSLSLELPLALTLLALRAGWAQEGTEPVLLEGECLVVCEPGRAAAGGPGGAALGEAPPGRVAFAAVRSHHHEPAGEIGNGTSGAIYFDQVLVNEGGGFDRTSGSFVAPVRGVYSFRFHVVKVYNRQTVQVSLMLNTWPVVSAFANDPDVTREAATSSVLLPLDPGDRVSLRLRRGNLLGGWKYSSFSGFLIFPL.

An N-terminal signal peptide occupies residues 1–32; it reads MLGTKRHWPPGPSLSLELPLALTLLALRAGWA. The 139-residue stretch at 67-205 folds into the C1q domain; it reads APPGRVAFAA…SFSGFLIFPL (139 aa). Asn-90 carries N-linked (GlcNAc...) asparagine glycosylation.

As to quaternary structure, heterohexamer; disulfide-linked heterotrimers. Interacts with CBLN1. May also form oligomers with CBLN2 and CBLN4.

Its subcellular location is the endoplasmic reticulum. It localises to the golgi apparatus. It is found in the cis-Golgi network. The protein localises to the secreted. The protein resides in the synapse. In terms of biological role, may be involved in synaptic functions in the CNS. This Bos taurus (Bovine) protein is Cerebellin-3 (CBLN3).